Consider the following 694-residue polypeptide: MRLGLSSRSARSEEGSEIFLEGPVDGELSRLHRQRKVMELERRAYSREVHQRIRKQVEEIRQLEMLRAKLQMQINVAQTQVKRLGDKKRLADMDHLLKCRAQVQIEIEALQEQNRALEKQIQDWETHILTQSKDISTPDVILDQKMKIQRRIRILEDQLDRVTCHFDIHLVRNAALREELELLRIERGRYLNMDRKLKKEIHLLQEMVGALSTSSTSAYTAREEAKTKMGMLQERAEKELAQSDTEAQILLRQISHLEQLHRFLKLKNHDRQPDPGVVQKEEQRAWETSEGLRKTSQEKLVLRYEDTLNKLAQLTGESDPDLLVEKYLELEERNFAEFNFINEQNSELYHLQEEIKEMQEALVSEHASQDKQSLEREQQCKVLQQDVEKVCSESERLEARFQVLRVQLEKIKTDIQVLFDKAQCDNSVIKDLLGVKTYMRDRDIGLFLSTIEKRLVQLLTVQAFLEVQNNVPLADAALLALGQSIQEPPKKTTPLKPPDTMEDSSGVVIKDDYPMSKEELLSQVMKLVQLQDEEGSPKKRDSSPSLTLSSPRISLAAASVHARKASVVPESILSHKTGRGRGTGSISHVTFGDSASAPGPVTLASTSASGLPVSGRGSQGGRGAFKHTSSSSYLGSTGYLETSRGRESGTGGGHSQSMGSEMSRGFSSGSGQTSSAAPASRPSSATSKDSRGYN.

Coiled-coil stretches lie at residues glutamate 27–asparagine 192 and arginine 222–glutamine 259. The interval arginine 271 to glutamate 290 is disordered. Residues asparagine 339 to leucine 418 adopt a coiled-coil conformation. 2 disordered regions span residues glutamine 531–serine 550 and serine 571–asparagine 694. Phosphoserine is present on residues serine 536, serine 542, serine 543, and serine 545. The span at threonine 628–threonine 642 shows a compositional bias: low complexity. The span at serine 655–glutamine 672 shows a compositional bias: polar residues. The segment covering threonine 673 to serine 687 has biased composition (low complexity).

The protein belongs to the ODA1/DCC2 family. In terms of assembly, component of the outer dynein arm-docking complex along with ODAD2, ODAD3, ODAD4 and CLXN. Interacts with ODAD3. Interacts with ODAD4; this interaction may facilitate the recruitment and/or attachment of outer dynein arm docking complex proteins,including ODAD1, ODAD3, and ODAD4 to ciliary axonemes. Interacts with DNAH9. Interacts with MNS1. Interacts with PIERCE1 and PIERCE2; the interactions link the outer dynein arms docking complex (ODA-DC) to the internal microtubule inner proteins (MIP) in cilium axoneme.

The protein resides in the cytoplasm. Its subcellular location is the cytoskeleton. The protein localises to the cilium axoneme. Functionally, component of the outer dynein arm-docking complex that mediates outer dynein arms (ODA) binding onto the doublet microtubule. Involved in mediating assembly of both ODAs and their axonemal docking complex onto ciliary microtubules. This Rattus norvegicus (Rat) protein is Outer dynein arm-docking complex subunit 1 (Odad1).